The primary structure comprises 541 residues: 2-hydroxyacylsphingosine 1-beta-galactosyltransferase (541 aa).

Residues 1–20 (MKSYTPYFILLWSAVGIAKA) form the signal peptide. N-linked (GlcNAc...) asparagine glycans are attached at residues N78, N333, and N442. A helical membrane pass occupies residues 472–492 (YFLLDIAFVLLLGAALLYFLL).

Belongs to the UDP-glycosyltransferase family.

The protein localises to the membrane. It localises to the endoplasmic reticulum. It catalyses the reaction an N-acylsphing-4-enine + UDP-alpha-D-galactose = a beta-D-galactosyl-(1&lt;-&gt;1')-N-acylsphing-4-enine + UDP + H(+). The enzyme catalyses an N-acyl-sphingoid base + UDP-alpha-D-galactose = a D-galactosylceramide + UDP + H(+). The catalysed reaction is N-(2-hydroxy-hexanoyl)-sphing-4-enine + UDP-alpha-D-galactose = N-(2-hydroxy-hexanoyl)-beta-D-galactosyl-sphing-4-enine + UDP + H(+). It carries out the reaction N-(2-hydroxy-hexanoyl)-sphinganine + UDP-alpha-D-galactose = N-(2-hydroxyhexanoyl)-beta-D-galactosylsphinganine + UDP + H(+). It participates in sphingolipid metabolism; galactosylceramide biosynthesis. Catalyzes the transfer of galactose to ceramide, a key enzymatic step in the biosynthesis of galactocerebrosides, which are abundant sphingolipids of the myelin membrane of the central nervous system and peripheral nervous system. Galactosylates both hydroxy- and non-hydroxy fatty acid-containing ceramides and diglycerides. The chain is 2-hydroxyacylsphingosine 1-beta-galactosyltransferase from Homo sapiens (Human).